The following is a 325-amino-acid chain: Glutarate 2-hydroxylase (325 aa).

3 residues coordinate Fe cation: histidine 160, aspartate 162, and histidine 292.

The protein belongs to the glutarate hydroxylase family. As to quaternary structure, homotetramer. Fe(2+) serves as cofactor.

It carries out the reaction glutarate + 2-oxoglutarate + O2 = (S)-2-hydroxyglutarate + succinate + CO2. It functions in the pathway amino-acid degradation. Acts as an alpha-ketoglutarate-dependent dioxygenase catalyzing hydroxylation of glutarate (GA) to L-2-hydroxyglutarate (L2HG). Functions in a L-lysine degradation pathway that proceeds via cadaverine, glutarate and L-2-hydroxyglutarate. The sequence is that of Glutarate 2-hydroxylase from Escherichia coli O127:H6 (strain E2348/69 / EPEC).